The primary structure comprises 587 residues: Adenine deaminase (587 aa).

It belongs to the metallo-dependent hydrolases superfamily. Adenine deaminase family. It depends on Mn(2+) as a cofactor.

It carries out the reaction adenine + H2O + H(+) = hypoxanthine + NH4(+). In Shewanella halifaxensis (strain HAW-EB4), this protein is Adenine deaminase.